Here is a 331-residue protein sequence, read N- to C-terminus: Nucleotide sugar transporter SLC35B4 (331 aa).

11 consecutive transmembrane segments (helical) span residues 4–24, 30–50, 59–79, 92–112, 117–137, 153–173, 201–221, 229–249, 251–267, 268–288, and 291–311; these read ALAVGLVFAGCCSNVIFLELL, GCGNIVTFAQFLFIAVEGFLF, PAIPIRYYAIMVTMFFTVSVV, LHMIFRSGSLIANMILGIIIL, SIFKYTSIALVSVGIFICTFM, GFQAFVWWLLGIGALTFALLM, ALPLPGFVFLASDIYDHAVLF, IPVIGVTLPIMWFYLLMNIIT, YVCIRGVFILTTECASL, TVTLVVTLRKFVSLIFSILYF, and PFTLWHWLGTLFVFIGTLMYT. The Mediates endoplasmic reticulum retention motif lies at 326-331; that stretch reads KDSKKN.

Belongs to the nucleotide-sugar transporter family. SLC35B subfamily.

The protein resides in the endoplasmic reticulum membrane. The catalysed reaction is UDP-N-acetyl-alpha-D-glucosamine(in) + UDP-alpha-D-glucuronate(out) = UDP-N-acetyl-alpha-D-glucosamine(out) + UDP-alpha-D-glucuronate(in). It catalyses the reaction UDP-alpha-D-xylose(in) + UDP-alpha-D-glucuronate(out) = UDP-alpha-D-xylose(out) + UDP-alpha-D-glucuronate(in). Antiporter that transports nucleotide sugars across the endoplasmic reticulum (ER) membrane in exchange for another nucleotide sugar. May couple UDP-alpha-D-glucuronate (UDP-GlcA) or UDP-alpha-D-xylose (UDP-Xyl) efflux to UDP-alpha-D-glucuronate (UDP-GlcA) influx into the ER lumen, which in turn stimulates glucuronidation and excretion of endobiotics and xenobiotics. Its function is as follows. Has UDP-GlcA:UDP-GlcNAc antiporter activity. The sequence is that of Nucleotide sugar transporter SLC35B4 (SLC35B4) from Homo sapiens (Human).